Here is a 361-residue protein sequence, read N- to C-terminus: MLLALFQWIAEDIRAFNVFSYITLRTMLAALTALSISFLIGPAMIRSLTTRKVGQSVRSDGPQSHLTKAGTPTMGGALILMAVIITTLLWADLSNRYIWLVLLTTLGFGAIGWVDDYRKVVQHNSKGLPASAKFFWQSIIALLVAVYLAMTAELPQHTDMIVPFFKEVAIPLGSFLFIILTYLVIVGSSNAVNLTDGLDGLAIMPTVMISGALAIFAYVAGHAIFAKYLGIPHIPSAGELAVFCGALAGAGLAFLWFNANPAEVFMGDVGALALGAALGVITVIVRQEIVLVIMGGVFVMEALSVMIQVASFKLFGRRVFRMAPLHHHYELKGWKENQVVVRFWIITIILVLIGLSTLKLR.

10 helical membrane-spanning segments follow: residues 28-48 (LAAL…IRSL), 73-93 (TMGG…WADL), 97-117 (YIWL…VDDY), 134-154 (FFWQ…TAEL), 168-188 (VAIP…IVGS), 200-220 (GLAI…AYVA), 237-257 (AGEL…FLWF), 264-284 (VFMG…ITVI), 289-309 (IVLV…MIQV), and 338-358 (QVVV…LSTL).

The protein belongs to the glycosyltransferase 4 family. MraY subfamily. Requires Mg(2+) as cofactor.

It is found in the cell inner membrane. The catalysed reaction is UDP-N-acetyl-alpha-D-muramoyl-L-alanyl-gamma-D-glutamyl-meso-2,6-diaminopimeloyl-D-alanyl-D-alanine + di-trans,octa-cis-undecaprenyl phosphate = di-trans,octa-cis-undecaprenyl diphospho-N-acetyl-alpha-D-muramoyl-L-alanyl-D-glutamyl-meso-2,6-diaminopimeloyl-D-alanyl-D-alanine + UMP. It participates in cell wall biogenesis; peptidoglycan biosynthesis. In terms of biological role, catalyzes the initial step of the lipid cycle reactions in the biosynthesis of the cell wall peptidoglycan: transfers peptidoglycan precursor phospho-MurNAc-pentapeptide from UDP-MurNAc-pentapeptide onto the lipid carrier undecaprenyl phosphate, yielding undecaprenyl-pyrophosphoryl-MurNAc-pentapeptide, known as lipid I. The sequence is that of Phospho-N-acetylmuramoyl-pentapeptide-transferase from Nitrosomonas eutropha (strain DSM 101675 / C91 / Nm57).